We begin with the raw amino-acid sequence, 220 residues long: HTH-type transcriptional repressor KstR (220 aa).

The HTH tetR-type domain occupies 36-96; sequence RERRKRILDA…SALGREFSRI (61 aa). The H-T-H motif DNA-binding region spans 59-78; that stretch reads QMRAVADRADVAVGTLYRYF.

In terms of assembly, homodimer.

Its function is as follows. Controls the expression of genes used for utilizing diverse lipids as energy sources. This Mycobacterium tuberculosis (strain ATCC 25618 / H37Rv) protein is HTH-type transcriptional repressor KstR (kstR).